We begin with the raw amino-acid sequence, 132 residues long: Myelin P2 protein (132 aa).

Ser2 carries the N-acetylserine modification. Arg107 provides a ligand contact to (9Z)-octadecenoate. Arg107 is a binding site for hexadecanoate. A disulfide bridge links Cys118 with Cys125. Position 127–129 (127–129 (RIY)) interacts with (9Z)-octadecenoate. 127–129 (RIY) contributes to the hexadecanoate binding site.

The protein belongs to the calycin superfamily. Fatty-acid binding protein (FABP) family. As to quaternary structure, monomer.

It is found in the cytoplasm. Functionally, may play a role in lipid transport protein in Schwann cells. May bind cholesterol. This chain is Myelin P2 protein, found in Sus scrofa (Pig).